The chain runs to 157 residues: Small ribosomal subunit protein uS7c (157 aa).

It belongs to the universal ribosomal protein uS7 family. In terms of assembly, part of the 30S ribosomal subunit.

The protein resides in the plastid. It localises to the organellar chromatophore. Functionally, one of the primary rRNA binding proteins, it binds directly to 16S rRNA where it nucleates assembly of the head domain of the 30S subunit. This chain is Small ribosomal subunit protein uS7c (rps7), found in Paulinella chromatophora.